We begin with the raw amino-acid sequence, 86 residues long: Defensin-like protein 97 (86 aa).

An N-terminal signal peptide occupies residues 1-27; it reads MGSLRVSTFAVAVVVCLSILLMSPTDG. 4 disulfides stabilise this stretch: Cys31–Cys74, Cys38–Cys60, Cys44–Cys71, and Cys48–Cys73.

The protein belongs to the DEFL family.

The protein resides in the secreted. The protein is Defensin-like protein 97 (LCR85) of Arabidopsis thaliana (Mouse-ear cress).